Here is a 438-residue protein sequence, read N- to C-terminus: Methyl-coenzyme M reductase subunit beta (438 aa).

Tyr-367 contacts coenzyme M. Coenzyme B is bound at residue Gly-369.

The protein belongs to the methyl-coenzyme M reductase beta subunit family. In terms of assembly, MCR is a hexamer of two alpha, two beta, and two gamma chains, forming a dimer of heterotrimers. Requires coenzyme F430 as cofactor.

Its subcellular location is the cytoplasm. The catalysed reaction is coenzyme B + methyl-coenzyme M = methane + coenzyme M-coenzyme B heterodisulfide. It participates in one-carbon metabolism; methyl-coenzyme M reduction; methane from methyl-coenzyme M: step 1/1. Component of the methyl-coenzyme M reductase (MCR) I that catalyzes the reductive cleavage of methyl-coenzyme M (CoM-S-CH3 or 2-(methylthio)ethanesulfonate) using coenzyme B (CoB or 7-mercaptoheptanoylthreonine phosphate) as reductant which results in the production of methane and the mixed heterodisulfide of CoB and CoM (CoM-S-S-CoB). This is the final step in methanogenesis. The chain is Methyl-coenzyme M reductase subunit beta (mcrB) from Methanothermus fervidus.